We begin with the raw amino-acid sequence, 436 residues long: Citrate synthase (436 aa).

Catalysis depends on residues H313 and D371.

Belongs to the citrate synthase family. As to quaternary structure, homohexamer.

The enzyme catalyses oxaloacetate + acetyl-CoA + H2O = citrate + CoA + H(+). Its pathway is carbohydrate metabolism; tricarboxylic acid cycle; isocitrate from oxaloacetate: step 1/2. The polypeptide is Citrate synthase (aarA) (Acetobacter aceti).